Here is a 467-residue protein sequence, read N- to C-terminus: Proton extrusion protein PxcA (467 aa).

Positions 183 to 205 are disordered; sequence TSPPQLIRPRTEQNKKPRGKADT. Positions 191–203 are enriched in basic and acidic residues; sequence PRTEQNKKPRGKA. The next 4 membrane-spanning stretches (helical) occupy residues 249–269, 352–372, 391–411, and 427–447; these read FILL…ALIV, IFSV…IMVL, IIIL…WEVI, and FIFL…KYWI.

This sequence belongs to the CemA family.

The protein localises to the cell inner membrane. Functionally, required for H(+) efflux immediately after light irradiation to form a rapid H(+) concentration gradient across the thylakoid membranes. Together with PxcL, contributes to transient H(+) uptake following dark to light transition. This is Proton extrusion protein PxcA from Trichormus variabilis (strain ATCC 29413 / PCC 7937) (Anabaena variabilis).